The chain runs to 763 residues: Amine oxidase [copper-containing] 3 (763 aa).

Over 1–5 the chain is Cytoplasmic; the sequence is MNQKT. The helical; Signal-anchor for type II membrane protein transmembrane segment at 6 to 26 threads the bilayer; the sequence is ILVLLILAVITIFALVCVLLV. Topologically, residues 27–763 are extracellular; it reads GRGGDGGEPS…AFSHGGFSHN (737 aa). An O-linked (GalNAc...) serine glycan is attached at Ser-43. N-linked (GlcNAc...) asparagine glycosylation occurs at Asn-137. A disulfide bridge connects residues Cys-198 and Cys-199. Residue Thr-212 is glycosylated (O-linked (GalNAc...) threonine). N-linked (GlcNAc...) asparagine glycans are attached at residues Asn-232 and Asn-294. Residue Asp-386 is the Proton acceptor of the active site. A disulfide bond links Cys-404 and Cys-430. Catalysis depends on Tyr-471, which acts as the Schiff-base intermediate with substrate; via topaquinone. A 2',4',5'-topaquinone modification is found at Tyr-471. Positions 520 and 522 each coordinate Cu(2+). Ca(2+) contacts are provided by Asp-529, Leu-530, Asp-531, and Glu-572. A glycan (N-linked (GlcNAc...) (complex) asparagine) is linked at Asn-592. Residue Asn-618 is glycosylated (N-linked (GlcNAc...) asparagine). Positions 641, 663, and 665 each coordinate Ca(2+). Residue Asn-666 is glycosylated (N-linked (GlcNAc...) asparagine). Glu-667, Asp-673, and Leu-674 together coordinate Ca(2+). An O-linked (GlcNAc) threonine glycan is attached at Thr-679. His-684 is a binding site for Cu(2+). Cys-734 and Cys-741 are oxidised to a cystine.

Belongs to the copper/topaquinone oxidase family. In terms of assembly, homodimer; disulfide-linked. Can heterodimerize with isoform 2 leading to reduced surface expression. Probably forms heterodimers with AOC2. The cofactor is Cu(2+). Requires Ca(2+) as cofactor. It depends on L-topaquinone as a cofactor. Topaquinone (TPQ) is generated by copper-dependent autoxidation of a specific tyrosyl residue. Post-translationally, N- and O-glycosylated. In terms of tissue distribution, strongly expressed on the high endothelial venules of peripheral lymph nodes and on hepatic endothelia. Also highly expressed in appendix, lung and small intestine. Expressed also in adipose tissue, in bone marrow, colon, heart, kidney, ovary, pancreas, placenta, prostate, skeletal muscle, spleen and testis. Isoform 2 seems to be the predominant transcript in fetal kidneys, fetal cartilage and fetal tonsils. The highest relative expression of isoform 2 occurs in skeletal muscle, heart, pancreas, kidney, and lung.

The protein localises to the cell membrane. The catalysed reaction is methylamine + O2 + H2O = formaldehyde + H2O2 + NH4(+). The enzyme catalyses benzylamine + O2 + H2O = benzaldehyde + H2O2 + NH4(+). It carries out the reaction 2-phenylethylamine + O2 + H2O = 2-phenylacetaldehyde + H2O2 + NH4(+). Functionally, catalyzes the oxidative deamination of primary amines to the corresponding aldehydes with the concomitant production of hydrogen peroxide and ammonia. Has a preference for the primary monoamines methylamine and benzylamine. Could also act on 2-phenylethylamine but much less efficiently. At endothelial cells surface can also function as a cell adhesion protein that participates in lymphocyte extravasation and recirculation by mediating the binding of lymphocytes to peripheral lymph node vascular endothelial cells in an L-selectin-independent fashion. In terms of biological role, has no semicarbazide-sensitive amine oxidase (SSAO) activity. This chain is Amine oxidase [copper-containing] 3, found in Homo sapiens (Human).